We begin with the raw amino-acid sequence, 78 residues long: Acyl carrier protein (78 aa).

The Carrier domain maps to 2 to 77; sequence QNIEKKIKKI…SIFDIIKKYV (76 aa). Serine 37 carries the O-(pantetheine 4'-phosphoryl)serine modification.

Belongs to the acyl carrier protein (ACP) family. 4'-phosphopantetheine is transferred from CoA to a specific serine of apo-ACP by AcpS. This modification is essential for activity because fatty acids are bound in thioester linkage to the sulfhydryl of the prosthetic group.

The protein localises to the cytoplasm. It participates in lipid metabolism; fatty acid biosynthesis. Carrier of the growing fatty acid chain in fatty acid biosynthesis. The sequence is that of Acyl carrier protein from Buchnera aphidicola subsp. Baizongia pistaciae (strain Bp).